The following is a 317-amino-acid chain: o-succinylbenzoate synthase (317 aa).

2-succinylbenzoate-binding positions include 71–73 and K95; that span reads NAT. K97 functions as the Proton donor in the catalytic mechanism. Positions 128, 154, and 177 each coordinate Mg(2+). 128-130 contacts 2-succinylbenzoate; that stretch reads DVN. K201 is a binding site for 2-succinylbenzoate. K201 (proton acceptor) is an active-site residue.

The protein belongs to the mandelate racemase/muconate lactonizing enzyme family. MenC type 1 subfamily. In terms of assembly, monomer. A divalent metal cation serves as cofactor.

It carries out the reaction (1R,6R)-6-hydroxy-2-succinyl-cyclohexa-2,4-diene-1-carboxylate = 2-succinylbenzoate + H2O. It participates in quinol/quinone metabolism; 1,4-dihydroxy-2-naphthoate biosynthesis; 1,4-dihydroxy-2-naphthoate from chorismate: step 4/7. It functions in the pathway quinol/quinone metabolism; menaquinone biosynthesis. Functionally, converts 2-succinyl-6-hydroxy-2,4-cyclohexadiene-1-carboxylate (SHCHC) to 2-succinylbenzoate (OSB). Does not show N-succinylamino acid racemase (NSAR) activity with N-succinyl-L-phenylglycine as substrate. This chain is o-succinylbenzoate synthase, found in Thermobifida fusca (strain YX).